An 811-amino-acid polypeptide reads, in one-letter code: Abnormal pharyngeal pumping eat-20 (811 aa).

The signal sequence occupies residues 1 to 20; the sequence is MTTFCRVLLIFGIYVAVSCA. The Extracellular portion of the chain corresponds to 21–749; that stretch reads QSVEDDVFHF…GKQSSAVASW (729 aa). N-linked (GlcNAc...) asparagine glycans are attached at residues Asn90, Asn171, and Asn232. EGF-like domains lie at 220 to 257, 258 to 293, and 301 to 335; these read PPSPCANHECHNNGTCLVSQEGAAMCLCRNGFTGDRCE, LDVCSAVPCQNGGVCRSNNGIAYCECPPAFSGLLCE, and AAPICNPECSNGQCVLKDGQPQCECRQGFTGANCN. 9 cysteine pairs are disulfide-bonded: Cys224-Cys235, Cys229-Cys245, Cys247-Cys256, Cys261-Cys272, Cys266-Cys281, Cys283-Cys292, Cys305-Cys314, Cys309-Cys323, and Cys325-Cys334. Asn371 carries N-linked (GlcNAc...) asparagine glycosylation. Disordered regions lie at residues 544-579, 592-659, and 690-739; these read FVSPNMPDENEEEEEDETTDETEETFPTPSTMQVAT, FPTT…AIST, and PHPQ…HTSS. The span at 551 to 567 shows a compositional bias: acidic residues; sequence DENEEEEEDETTDETEE. Residues 570 to 579 show a composition bias toward polar residues; it reads PTPSTMQVAT. Acidic residues predominate over residues 597 to 612; it reads DMEETDEEEDMTEEVT. Over residues 626–639 the composition is skewed to low complexity; the sequence is PSSTTFTTEAPTTT. 2 stretches are compositionally biased toward acidic residues: residues 640-655 and 705-717; these read MEEEETTEQEEIESEE and IESEEERTTESNE. The helical transmembrane segment at 750 to 770 threads the bilayer; the sequence is IIATIALIVLGSLLLATSLFV. Residues 771–811 are Cytoplasmic-facing; the sequence is LRYIRQSRKLHGKYNPAREEHNLSAAYAMPMSHIAKEERLI.

The protein resides in the membrane. Functionally, regulates pharyngeal pumping during feeding. The chain is Abnormal pharyngeal pumping eat-20 (eat-20) from Caenorhabditis briggsae.